The sequence spans 300 residues: tRNA pseudouridine synthase B (300 aa).

Aspartate 47 acts as the Nucleophile in catalysis.

Belongs to the pseudouridine synthase TruB family. Type 1 subfamily.

The enzyme catalyses uridine(55) in tRNA = pseudouridine(55) in tRNA. Responsible for synthesis of pseudouridine from uracil-55 in the psi GC loop of transfer RNAs. In Azoarcus sp. (strain BH72), this protein is tRNA pseudouridine synthase B.